A 194-amino-acid polypeptide reads, in one-letter code: Probable GTP-binding protein EngB (194 aa).

Positions 22–194 constitute an EngB-type G domain; sequence PLPEVALAGR…AWKAILHAIS (173 aa). Residues 30 to 37, 57 to 61, 75 to 78, 142 to 145, and 174 to 176 each bind GTP; these read GRSNVGKS, GKTQT, DVPG, TKCD, and FSS. The Mg(2+) site is built by S37 and T59.

Belongs to the TRAFAC class TrmE-Era-EngA-EngB-Septin-like GTPase superfamily. EngB GTPase family. Requires Mg(2+) as cofactor.

Necessary for normal cell division and for the maintenance of normal septation. This Halalkalibacterium halodurans (strain ATCC BAA-125 / DSM 18197 / FERM 7344 / JCM 9153 / C-125) (Bacillus halodurans) protein is Probable GTP-binding protein EngB.